The chain runs to 109 residues: MASVVTKKSKKSGDTINAKLALTMKSGKYVLGYKSTLKTLRSGKAKLILIAGNCPPLRKSELEYYAMLSKANVHHYAGTNIDLGTACGKLFRVGVLAITDAGDSDILDA.

This sequence belongs to the eukaryotic ribosomal protein eL30 family. Component of the large ribosomal subunit (LSU). Mature yeast ribosomes consist of a small (40S) and a large (60S) subunit. The 40S small subunit contains 1 molecule of ribosomal RNA (18S rRNA) and at least 33 different proteins. The large 60S subunit contains 3 rRNA molecules (25S, 5.8S and 5S rRNA) and at least 46 different proteins.

It is found in the cytoplasm. Its function is as follows. Component of the ribosome, a large ribonucleoprotein complex responsible for the synthesis of proteins in the cell. The small ribosomal subunit (SSU) binds messenger RNAs (mRNAs) and translates the encoded message by selecting cognate aminoacyl-transfer RNA (tRNA) molecules. The large subunit (LSU) contains the ribosomal catalytic site termed the peptidyl transferase center (PTC), which catalyzes the formation of peptide bonds, thereby polymerizing the amino acids delivered by tRNAs into a polypeptide chain. The nascent polypeptides leave the ribosome through a tunnel in the LSU and interact with protein factors that function in enzymatic processing, targeting, and the membrane insertion of nascent chains at the exit of the ribosomal tunnel. This chain is Large ribosomal subunit protein eL30A (rpl3001), found in Schizosaccharomyces pombe (strain 972 / ATCC 24843) (Fission yeast).